The chain runs to 206 residues: Urease accessory protein UreG (206 aa).

12-19 is a GTP binding site; it reads GPVGSGKT.

This sequence belongs to the SIMIBI class G3E GTPase family. UreG subfamily. As to quaternary structure, homodimer. UreD, UreF and UreG form a complex that acts as a GTP-hydrolysis-dependent molecular chaperone, activating the urease apoprotein by helping to assemble the nickel containing metallocenter of UreC. The UreE protein probably delivers the nickel.

The protein localises to the cytoplasm. Functionally, facilitates the functional incorporation of the urease nickel metallocenter. This process requires GTP hydrolysis, probably effectuated by UreG. In Synechocystis sp. (strain ATCC 27184 / PCC 6803 / Kazusa), this protein is Urease accessory protein UreG.